A 180-amino-acid polypeptide reads, in one-letter code: Large ribosomal subunit protein uL6 (180 aa).

Belongs to the universal ribosomal protein uL6 family. In terms of assembly, part of the 50S ribosomal subunit.

Functionally, this protein binds to the 23S rRNA, and is important in its secondary structure. It is located near the subunit interface in the base of the L7/L12 stalk, and near the tRNA binding site of the peptidyltransferase center. The sequence is that of Large ribosomal subunit protein uL6 from Borrelia turicatae (strain 91E135).